Reading from the N-terminus, the 644-residue chain is Exoribonuclease 2 (644 aa).

Residues 189 to 516 (RQDLTALNFV…NHRLLKAVIK (328 aa)) form the RNB domain. The region spanning 561–643 (NTRFAAEIID…ETRSIIARPA (83 aa)) is the S1 motif domain.

This sequence belongs to the RNR ribonuclease family. RNase II subfamily.

Its subcellular location is the cytoplasm. It carries out the reaction Exonucleolytic cleavage in the 3'- to 5'-direction to yield nucleoside 5'-phosphates.. In terms of biological role, involved in mRNA degradation. Hydrolyzes single-stranded polyribonucleotides processively in the 3' to 5' direction. This is Exoribonuclease 2 from Salmonella paratyphi B (strain ATCC BAA-1250 / SPB7).